The following is a 148-amino-acid chain: Probable histone H2A.1 (148 aa).

The segment covering 1-23 has biased composition (basic residues); that stretch reads MDASTKTKKGAGGRKGGPRKKSV. Disordered stretches follow at residues 1 to 28 and 127 to 148; these read MDAS…RSTR and KNEK…PKKA. Residues 131–142 show a composition bias toward low complexity; the sequence is AATTTKSPSKAT. 2 short sequence motifs (SPKK motif) span residues 137–140 and 144–147; these read SPSK and SPKK.

It belongs to the histone H2A family. As to quaternary structure, the nucleosome is a histone octamer containing two molecules each of H2A, H2B, H3 and H4 assembled in one H3-H4 heterotetramer and two H2A-H2B heterodimers. The octamer wraps approximately 147 bp of DNA.

The protein resides in the nucleus. The protein localises to the chromosome. Functionally, core component of nucleosome. Nucleosomes wrap and compact DNA into chromatin, limiting DNA accessibility to the cellular machineries which require DNA as a template. Histones thereby play a central role in transcription regulation, DNA repair, DNA replication and chromosomal stability. DNA accessibility is regulated via a complex set of post-translational modifications of histones, also called histone code, and nucleosome remodeling. The chain is Probable histone H2A.1 from Medicago truncatula (Barrel medic).